We begin with the raw amino-acid sequence, 649 residues long: PTS system mannitol-specific EIICBA component (649 aa).

One can recognise a PTS EIIC type-2 domain in the interval 13-342 (FGRFLSNMVM…LLMKAQTSTE (330 aa)). The next 6 membrane-spanning stretches (helical) occupy residues 25–46 (IGAFIAWGFITALFIPTGWVPN), 51–71 (SLVGPMITYLLPLLIGYTGGK), 135–156 (SAGIIGMLCAIIAFFLIGPFVK), 166–186 (VNFLVTAHLLPLTSIFVEPAK), 274–293 (AIAGGMTGVFTLTVFNAGLV), and 314–335 (LGVVCSIFAAAAVSFTVAALLM). The region spanning 384-475 (QSIIVACDAG…LVTQLLAAKR (92 aa)) is the PTS EIIB type-2 domain. C390 serves as the catalytic Phosphocysteine intermediate; for EIIB activity. The residue at position 390 (C390) is a Phosphocysteine; by EIIA. Residues 504 to 646 (FQLQKENIHL…SDVLSILATS (143 aa)) form the PTS EIIA type-2 domain. The active-site Tele-phosphohistidine intermediate; for EIIA activity is H564. H564 bears the Phosphohistidine; by HPr mark.

In terms of assembly, homodimer. An intramolecular phosphotransfer takes places between His-564 and Cys-390.

It localises to the cell inner membrane. The enzyme catalyses D-mannitol(out) + N(pros)-phospho-L-histidyl-[protein] = D-mannitol 1-phosphate(in) + L-histidyl-[protein]. The phosphoenolpyruvate-dependent sugar phosphotransferase system (sugar PTS), a major carbohydrate active transport system, catalyzes the phosphorylation of incoming sugar substrates concomitantly with their translocation across the cell membrane. This system is involved in D-mannitol transport. This Vibrio cholerae serotype O1 (strain ATCC 39315 / El Tor Inaba N16961) protein is PTS system mannitol-specific EIICBA component (mtlA).